An 813-amino-acid polypeptide reads, in one-letter code: Leucine--tRNA ligase (813 aa).

A 'HIGH' region motif is present at residues 39–49 (PYPSGRIHMGH). The 'KMSKS' region motif lies at 582–586 (KMSKS). K585 lines the ATP pocket.

The protein belongs to the class-I aminoacyl-tRNA synthetase family.

It is found in the cytoplasm. It catalyses the reaction tRNA(Leu) + L-leucine + ATP = L-leucyl-tRNA(Leu) + AMP + diphosphate. The polypeptide is Leucine--tRNA ligase (Campylobacter hominis (strain ATCC BAA-381 / DSM 21671 / CCUG 45161 / LMG 19568 / NCTC 13146 / CH001A)).